A 231-amino-acid chain; its full sequence is Sensory transduction protein BceR (231 aa).

Positions 3-116 (KLLLIEDDES…VLIAKIQAMF (114 aa)) constitute a Response regulatory domain. Asp-52 carries the post-translational modification 4-aspartylphosphate. Residues 127-225 (STIKTWCGAA…KVGQGYIAKE (99 aa)) constitute a DNA-binding region (ompR/PhoB-type).

Phosphorylated by BceS.

The protein localises to the cytoplasm. Its function is as follows. Member of the two-component regulatory system BceS/BceR involved in the regulation of bacitracin resistance. When activated by BceS, binds to the upstream region of the bceAB promoter and up-regulates the expression of these two genes. The sequence is that of Sensory transduction protein BceR (bceR) from Bacillus subtilis (strain 168).